Reading from the N-terminus, the 806-residue chain is Putative phage-related protein YobO (806 aa).

The interval 1-23 (MVHFKNCPDPSLNANSQSHPEFS) is disordered. Over residues 12–21 (LNANSQSHPE) the composition is skewed to polar residues. PbH1 repeat units lie at residues 199-221 (VEYG…DITS), 237-259 (SRYI…TTHY), 260-292 (SEYI…EIDD), 294-315 (SRHV…EVKA), 419-441 (SQNI…DINL), and 448-470 (TDYI…SIGG).

The chain is Putative phage-related protein YobO (yobO) from Bacillus subtilis (strain 168).